Here is a 149-residue protein sequence, read N- to C-terminus: D-aminoacyl-tRNA deacylase (149 aa).

Positions 139-140 match the Gly-cisPro motif, important for rejection of L-amino acids motif; sequence GP.

This sequence belongs to the DTD family. Homodimer.

Its subcellular location is the cytoplasm. The catalysed reaction is glycyl-tRNA(Ala) + H2O = tRNA(Ala) + glycine + H(+). It catalyses the reaction a D-aminoacyl-tRNA + H2O = a tRNA + a D-alpha-amino acid + H(+). An aminoacyl-tRNA editing enzyme that deacylates mischarged D-aminoacyl-tRNAs. Also deacylates mischarged glycyl-tRNA(Ala), protecting cells against glycine mischarging by AlaRS. Acts via tRNA-based rather than protein-based catalysis; rejects L-amino acids rather than detecting D-amino acids in the active site. By recycling D-aminoacyl-tRNA to D-amino acids and free tRNA molecules, this enzyme counteracts the toxicity associated with the formation of D-aminoacyl-tRNA entities in vivo and helps enforce protein L-homochirality. In Candida glabrata (strain ATCC 2001 / BCRC 20586 / JCM 3761 / NBRC 0622 / NRRL Y-65 / CBS 138) (Yeast), this protein is D-aminoacyl-tRNA deacylase (DTD1).